The following is a 145-amino-acid chain: Ponticulin-like protein B (145 aa).

The N-terminal stretch at 1-22 is a signal peptide; it reads MLFIKSLLLLLSLIFAVSNATG. N-linked (GlcNAc...) asparagine glycosylation is present at asparagine 34. The segment at 107 to 126 is disordered; sequence DTTSSSTSPSSTSPSSTSPA. Positions 108–126 are enriched in low complexity; the sequence is TTSSSTSPSSTSPSSTSPA. Serine 117 is lipidated: GPI-like-anchor amidated serine. Residues 118 to 145 constitute a propeptide, removed in mature form; the sequence is TSPSSTSPASTLIGSIAFVTLAALFALI.

Belongs to the ponticulin family. Post-translationally, the GPI-like-anchor contains a phosphoceramide group, rather than a phosphatidyl group.

It localises to the cell membrane. Its function is as follows. Binds F-actin and nucleates actin assembly. The polypeptide is Ponticulin-like protein B (ponB) (Dictyostelium discoideum (Social amoeba)).